The sequence spans 94 residues: Co-chaperonin GroES (94 aa).

This sequence belongs to the GroES chaperonin family. As to quaternary structure, heptamer of 7 subunits arranged in a ring. Interacts with the chaperonin GroEL.

The protein resides in the cytoplasm. Its function is as follows. Together with the chaperonin GroEL, plays an essential role in assisting protein folding. The GroEL-GroES system forms a nano-cage that allows encapsulation of the non-native substrate proteins and provides a physical environment optimized to promote and accelerate protein folding. GroES binds to the apical surface of the GroEL ring, thereby capping the opening of the GroEL channel. This is Co-chaperonin GroES from Limosilactobacillus reuteri (strain DSM 20016) (Lactobacillus reuteri).